A 522-amino-acid polypeptide reads, in one-letter code: 2-isopropylmalate synthase (522 aa).

Residues 5-267 (VIIFDTTLRD…ETGINAKEIH (263 aa)) enclose the Pyruvate carboxyltransferase domain. D14, H202, H204, and N238 together coordinate Mn(2+). The tract at residues 392–522 (QLQQLVVQSD…MQKNRELGGV (131 aa)) is regulatory domain.

It belongs to the alpha-IPM synthase/homocitrate synthase family. LeuA type 1 subfamily. In terms of assembly, homodimer. Requires Mn(2+) as cofactor.

Its subcellular location is the cytoplasm. The enzyme catalyses 3-methyl-2-oxobutanoate + acetyl-CoA + H2O = (2S)-2-isopropylmalate + CoA + H(+). The protein operates within amino-acid biosynthesis; L-leucine biosynthesis; L-leucine from 3-methyl-2-oxobutanoate: step 1/4. Its function is as follows. Catalyzes the condensation of the acetyl group of acetyl-CoA with 3-methyl-2-oxobutanoate (2-ketoisovalerate) to form 3-carboxy-3-hydroxy-4-methylpentanoate (2-isopropylmalate). In Shewanella putrefaciens (strain CN-32 / ATCC BAA-453), this protein is 2-isopropylmalate synthase.